The sequence spans 336 residues: Mitochondrial import receptor subunit TOM40 homolog (336 aa).

A disordered region spans residues 1–58 (MGNVLAASSPAPPPAGSPPVPGLVSVPPGFTMPPVAGLTPTPDKKEPQEERLPNPGTF). Pro residues predominate over residues 10–21 (PAPPPAGSPPVP). Residues 42 to 52 (PDKKEPQEERL) are compositionally biased toward basic and acidic residues.

Belongs to the Tom40 family. In terms of assembly, forms part of the preprotein translocase complex of the outer mitochondrial membrane (TOM complex). Interacts with mitochondrial targeting sequences.

The protein resides in the mitochondrion outer membrane. Functionally, channel-forming protein essential for import of protein precursors into mitochondria. This is Mitochondrial import receptor subunit TOM40 homolog (tomm40) from Xenopus laevis (African clawed frog).